Reading from the N-terminus, the 450-residue chain is Signal recognition particle 54 kDa protein (450 aa).

GTP is bound by residues 107–114 (GIQGSGKT), 188–192 (DTAGR), and 247–250 (TKLD).

Belongs to the GTP-binding SRP family. SRP54 subfamily. Part of the signal recognition particle protein translocation system, which is composed of SRP and FtsY. Archaeal SRP consists of a 7S RNA molecule of 300 nucleotides and two protein subunits: SRP54 and SRP19.

The protein localises to the cytoplasm. The enzyme catalyses GTP + H2O = GDP + phosphate + H(+). Its function is as follows. Involved in targeting and insertion of nascent membrane proteins into the cytoplasmic membrane. Binds to the hydrophobic signal sequence of the ribosome-nascent chain (RNC) as it emerges from the ribosomes. The SRP-RNC complex is then targeted to the cytoplasmic membrane where it interacts with the SRP receptor FtsY. The chain is Signal recognition particle 54 kDa protein from Methanococcus maripaludis (strain C5 / ATCC BAA-1333).